The primary structure comprises 316 residues: MSDTATPLAPSGVFSVPGKDGDPSLREWLALLKPRVISLVVFTGAAGMAVAPRWPSIPIGLITILCICIGAGAAGAINMWYDRDIDAIMKRTVVRPIPDGRMPEQAALVYGVVLSVLSVIVLWLATNALAADILAFSIFFYSVIYTMWLKRSTPQNIVIGGAAGAFPPMIGWAATMNSMAVLPVAMFAIVFLWTPPHFWSLSLYACKDYGKAGIPMLPVVKGARHTRWQILIYTFILTAVSLVPSFVHEVGLTYTVVTSLLDLGFILCAFRVLMDKQDAEGVSLTKDKPARFAFRYSLVYLFLLFCGLLVDRVLIG.

A run of 9 helical transmembrane segments spans residues 28-48, 57-77, 106-126, 129-149, 156-176, 179-199, 230-250, 254-274, and 296-316; these read WLAL…AAGM, IPIG…AGAI, AALV…WLAT, LAAD…TMWL, NIVI…AATM, MAVL…PHFW, ILIY…VHEV, YTVV…RVLM, and YSLV…VLIG.

The protein belongs to the UbiA prenyltransferase family. Protoheme IX farnesyltransferase subfamily.

The protein localises to the cell inner membrane. It catalyses the reaction heme b + (2E,6E)-farnesyl diphosphate + H2O = Fe(II)-heme o + diphosphate. It functions in the pathway porphyrin-containing compound metabolism; heme O biosynthesis; heme O from protoheme: step 1/1. Converts heme B (protoheme IX) to heme O by substitution of the vinyl group on carbon 2 of heme B porphyrin ring with a hydroxyethyl farnesyl side group. The chain is Protoheme IX farnesyltransferase from Gluconobacter oxydans (strain 621H) (Gluconobacter suboxydans).